Reading from the N-terminus, the 174-residue chain is Ribosome maturation factor RimM (174 aa).

The 74-residue stretch at glutamate 98–leucine 171 folds into the PRC barrel domain.

It belongs to the RimM family. Binds ribosomal protein uS19.

The protein localises to the cytoplasm. Its function is as follows. An accessory protein needed during the final step in the assembly of 30S ribosomal subunit, possibly for assembly of the head region. Essential for efficient processing of 16S rRNA. May be needed both before and after RbfA during the maturation of 16S rRNA. It has affinity for free ribosomal 30S subunits but not for 70S ribosomes. In Bacillus licheniformis (strain ATCC 14580 / DSM 13 / JCM 2505 / CCUG 7422 / NBRC 12200 / NCIMB 9375 / NCTC 10341 / NRRL NRS-1264 / Gibson 46), this protein is Ribosome maturation factor RimM.